The sequence spans 83 residues: Large ribosomal subunit protein uL23 (83 aa).

This sequence belongs to the universal ribosomal protein uL23 family. Part of the 50S ribosomal subunit. Contacts protein L29.

Functionally, binds to 23S rRNA. One of the proteins that surrounds the polypeptide exit tunnel on the outside of the ribosome. The polypeptide is Large ribosomal subunit protein uL23 (Archaeoglobus fulgidus (strain ATCC 49558 / DSM 4304 / JCM 9628 / NBRC 100126 / VC-16)).